A 359-amino-acid polypeptide reads, in one-letter code: tRNA-specific 2-thiouridylase MnmA (359 aa).

Residues 7–14 and Met-33 contribute to the ATP site; that span reads AMSGGVDS. Cys-101 serves as the catalytic Nucleophile. A disulfide bridge connects residues Cys-101 and Cys-198. Gly-125 contributes to the ATP binding site. The segment at 148–150 is interaction with tRNA; sequence KDQ. Cys-198 serves as the catalytic Cysteine persulfide intermediate.

Belongs to the MnmA/TRMU family.

The protein localises to the cytoplasm. It catalyses the reaction S-sulfanyl-L-cysteinyl-[protein] + uridine(34) in tRNA + AH2 + ATP = 2-thiouridine(34) in tRNA + L-cysteinyl-[protein] + A + AMP + diphosphate + H(+). Catalyzes the 2-thiolation of uridine at the wobble position (U34) of tRNA, leading to the formation of s(2)U34. The sequence is that of tRNA-specific 2-thiouridylase MnmA from Chloroflexus aurantiacus (strain ATCC 29366 / DSM 635 / J-10-fl).